Reading from the N-terminus, the 238-residue chain is Purine nucleoside phosphorylase DeoD-type (238 aa).

H5 is an a purine D-ribonucleoside binding site. Residues G21, R25, R44, and 88–91 contribute to the phosphate site; that span reads RIGT. A purine D-ribonucleoside-binding positions include 180–182 and 204–205; these read DME and SD. D205 functions as the Proton donor in the catalytic mechanism.

This sequence belongs to the PNP/UDP phosphorylase family. Homohexamer; trimer of homodimers.

It catalyses the reaction a purine D-ribonucleoside + phosphate = a purine nucleobase + alpha-D-ribose 1-phosphate. It carries out the reaction a purine 2'-deoxy-D-ribonucleoside + phosphate = a purine nucleobase + 2-deoxy-alpha-D-ribose 1-phosphate. Catalyzes the reversible phosphorolytic breakdown of the N-glycosidic bond in the beta-(deoxy)ribonucleoside molecules, with the formation of the corresponding free purine bases and pentose-1-phosphate. The protein is Purine nucleoside phosphorylase DeoD-type of Buchnera aphidicola subsp. Baizongia pistaciae (strain Bp).